A 488-amino-acid polypeptide reads, in one-letter code: Proline--tRNA ligase (488 aa).

The protein belongs to the class-II aminoacyl-tRNA synthetase family. ProS type 3 subfamily. In terms of assembly, homodimer.

The protein localises to the cytoplasm. The catalysed reaction is tRNA(Pro) + L-proline + ATP = L-prolyl-tRNA(Pro) + AMP + diphosphate. Its function is as follows. Catalyzes the attachment of proline to tRNA(Pro) in a two-step reaction: proline is first activated by ATP to form Pro-AMP and then transferred to the acceptor end of tRNA(Pro). This Symbiobacterium thermophilum (strain DSM 24528 / JCM 14929 / IAM 14863 / T) protein is Proline--tRNA ligase.